A 172-amino-acid polypeptide reads, in one-letter code: Large ribosomal subunit protein bL21m (172 aa).

Residues 1–20 constitute a mitochondrion transit peptide; sequence MIRNIGSNLMKSSSSILLRN.

It belongs to the bacterial ribosomal protein bL21 family.

Its subcellular location is the mitochondrion. This Dictyostelium discoideum (Social amoeba) protein is Large ribosomal subunit protein bL21m (mrpl21).